The following is a 287-amino-acid chain: Shikimate dehydrogenase (NADP(+)) (287 aa).

Residues 18–20 (SYS) and Thr-66 contribute to the shikimate site. The active-site Proton acceptor is Lys-70. Glu-82 is a binding site for NADP(+). Residues Asn-91 and Asp-106 each coordinate shikimate. NADP(+) is bound by residues 130–134 (GSGGA) and Met-228. Tyr-230 contributes to the shikimate binding site. Gly-251 is an NADP(+) binding site.

It belongs to the shikimate dehydrogenase family. As to quaternary structure, homodimer.

It carries out the reaction shikimate + NADP(+) = 3-dehydroshikimate + NADPH + H(+). It functions in the pathway metabolic intermediate biosynthesis; chorismate biosynthesis; chorismate from D-erythrose 4-phosphate and phosphoenolpyruvate: step 4/7. In terms of biological role, involved in the biosynthesis of the chorismate, which leads to the biosynthesis of aromatic amino acids. Catalyzes the reversible NADPH linked reduction of 3-dehydroshikimate (DHSA) to yield shikimate (SA). In Chlorobium chlorochromatii (strain CaD3), this protein is Shikimate dehydrogenase (NADP(+)).